Consider the following 428-residue polypeptide: Glutamate-1-semialdehyde 2,1-aminomutase (428 aa).

Lys-267 bears the N6-(pyridoxal phosphate)lysine mark.

It belongs to the class-III pyridoxal-phosphate-dependent aminotransferase family. HemL subfamily. As to quaternary structure, homodimer. The cofactor is pyridoxal 5'-phosphate.

The protein resides in the cytoplasm. The enzyme catalyses (S)-4-amino-5-oxopentanoate = 5-aminolevulinate. The protein operates within porphyrin-containing compound metabolism; protoporphyrin-IX biosynthesis; 5-aminolevulinate from L-glutamyl-tRNA(Glu): step 2/2. This Flavobacterium psychrophilum (strain ATCC 49511 / DSM 21280 / CIP 103535 / JIP02/86) protein is Glutamate-1-semialdehyde 2,1-aminomutase.